A 249-amino-acid chain; its full sequence is Bis(5'-nucleosyl)-tetraphosphatase PrpE [asymmetrical] (249 aa).

Belongs to the PrpE family. The cofactor is Ni(2+).

It carries out the reaction P(1),P(4)-bis(5'-guanosyl) tetraphosphate + H2O = GMP + GTP + 2 H(+). Its function is as follows. Asymmetrically hydrolyzes Ap4p to yield AMP and ATP. The chain is Bis(5'-nucleosyl)-tetraphosphatase PrpE [asymmetrical] from Bacillus velezensis (strain DSM 23117 / BGSC 10A6 / LMG 26770 / FZB42) (Bacillus amyloliquefaciens subsp. plantarum).